A 139-amino-acid polypeptide reads, in one-letter code: Probable disulfide formation protein C 1 (139 aa).

A helical membrane pass occupies residues 8–27 (EYALFTAWGASFIATLGSLY). Cysteines 37 and 40 form a disulfide. Helical transmembrane passes span 42–61 (YQRI…VVKK) and 68–85 (YSLP…YHYA). The cysteines at positions 99 and 104 are disulfide-linked. Residues 113-135 (GFVTIPFLALIGFITIAVCSFIV) traverse the membrane as a helical segment.

This sequence belongs to the DsbB family. BdbC subfamily.

The protein localises to the cell membrane. Functionally, required for disulfide bond formation in some proteins. The polypeptide is Probable disulfide formation protein C 1 (bdbC1) (Bacillus cereus (strain ATCC 10987 / NRS 248)).